A 356-amino-acid chain; its full sequence is S-adenosylmethionine:tRNA ribosyltransferase-isomerase (356 aa).

Belongs to the QueA family. As to quaternary structure, monomer.

The protein resides in the cytoplasm. It carries out the reaction 7-aminomethyl-7-carbaguanosine(34) in tRNA + S-adenosyl-L-methionine = epoxyqueuosine(34) in tRNA + adenine + L-methionine + 2 H(+). It functions in the pathway tRNA modification; tRNA-queuosine biosynthesis. In terms of biological role, transfers and isomerizes the ribose moiety from AdoMet to the 7-aminomethyl group of 7-deazaguanine (preQ1-tRNA) to give epoxyqueuosine (oQ-tRNA). The chain is S-adenosylmethionine:tRNA ribosyltransferase-isomerase from Escherichia coli O6:K15:H31 (strain 536 / UPEC).